A 329-amino-acid chain; its full sequence is GTP 3',8-cyclase (329 aa).

Residues 8 to 234 (AFARKFYYLR…QLRQRSDGPA (227 aa)) form the Radical SAM core domain. Residue Arg-17 participates in GTP binding. Cys-24 and Cys-28 together coordinate [4Fe-4S] cluster. Tyr-30 serves as a coordination point for S-adenosyl-L-methionine. Cys-31 serves as a coordination point for [4Fe-4S] cluster. A GTP-binding site is contributed by Arg-68. Gly-72 lines the S-adenosyl-L-methionine pocket. Thr-99 contacts GTP. Ser-123 is an S-adenosyl-L-methionine binding site. Lys-160 serves as a coordination point for GTP. S-adenosyl-L-methionine is bound at residue Met-194. Cys-257 and Cys-260 together coordinate [4Fe-4S] cluster. Residue 262 to 264 (RLR) participates in GTP binding. Residue Cys-274 participates in [4Fe-4S] cluster binding.

Belongs to the radical SAM superfamily. MoaA family. Monomer and homodimer. Requires [4Fe-4S] cluster as cofactor.

It catalyses the reaction GTP + AH2 + S-adenosyl-L-methionine = (8S)-3',8-cyclo-7,8-dihydroguanosine 5'-triphosphate + 5'-deoxyadenosine + L-methionine + A + H(+). The protein operates within cofactor biosynthesis; molybdopterin biosynthesis. Its function is as follows. Catalyzes the cyclization of GTP to (8S)-3',8-cyclo-7,8-dihydroguanosine 5'-triphosphate. The polypeptide is GTP 3',8-cyclase (Escherichia coli O7:K1 (strain IAI39 / ExPEC)).